Consider the following 218-residue polypeptide: N-(5'-phosphoribosyl)anthranilate isomerase (218 aa).

Belongs to the TrpF family.

The enzyme catalyses N-(5-phospho-beta-D-ribosyl)anthranilate = 1-(2-carboxyphenylamino)-1-deoxy-D-ribulose 5-phosphate. Its pathway is amino-acid biosynthesis; L-tryptophan biosynthesis; L-tryptophan from chorismate: step 3/5. This is N-(5'-phosphoribosyl)anthranilate isomerase from Bacillus licheniformis (strain ATCC 14580 / DSM 13 / JCM 2505 / CCUG 7422 / NBRC 12200 / NCIMB 9375 / NCTC 10341 / NRRL NRS-1264 / Gibson 46).